Reading from the N-terminus, the 779-residue chain is 3-isopropylmalate dehydratase (779 aa).

Residues cysteine 360, cysteine 421, and cysteine 424 each contribute to the [4Fe-4S] cluster site. Positions 484–518 (QDQSSPKVEVTSEDEKELESAAYDHAEPVQPEDAP) are disordered. Residue serine 488 is modified to Phosphoserine. Threonine 494 carries the post-translational modification Phosphothreonine. Position 495 is a phosphoserine (serine 495). Basic and acidic residues predominate over residues 501-510 (LESAAYDHAE).

Belongs to the aconitase/IPM isomerase family. Monomer. The cofactor is [4Fe-4S] cluster.

It catalyses the reaction (2R,3S)-3-isopropylmalate = (2S)-2-isopropylmalate. Its pathway is amino-acid biosynthesis; L-leucine biosynthesis; L-leucine from 3-methyl-2-oxobutanoate: step 2/4. In terms of biological role, catalyzes the isomerization between 2-isopropylmalate and 3-isopropylmalate, via the formation of 2-isopropylmaleate. This chain is 3-isopropylmalate dehydratase (LEU1), found in Saccharomyces cerevisiae (strain ATCC 204508 / S288c) (Baker's yeast).